A 230-amino-acid polypeptide reads, in one-letter code: All-trans retinoic acid-induced differentiation factor (230 aa).

An N-terminal signal peptide occupies residues 1–26 (MTANVTVSSMYLFTVLLLLFNVYVNS). At 27 to 200 (QDTDAQLCQM…YKCMRQGEFP (174 aa)) the chain is on the extracellular side. An EGF-like domain is found at 152–194 (QKNACNQTVQMPLVCPENSLCSPYGPGFFECSCLNNFHGYKCM). Disulfide bonds link cysteine 156/cysteine 172, cysteine 166/cysteine 182, and cysteine 184/cysteine 193. Residues 201 to 221 (LVKVLGILTASTVVVSSVLWF) form a helical membrane-spanning segment. Over 222 to 230 (TQRRKVKNT) the chain is Cytoplasmic.

Its subcellular location is the nucleus envelope. It is found in the cell membrane. The protein resides in the lysosome membrane. Its function is as follows. Involved in osteoblast cell differentiation. May play a role in inducing the cell cycle arrest. This is All-trans retinoic acid-induced differentiation factor (atraid) from Danio rerio (Zebrafish).